Here is a 483-residue protein sequence, read N- to C-terminus: Endoplasmic reticulum lectin 1 (483 aa).

Positions 1–33 are cleaved as a signal peptide; it reads MEEGGGGVRSLVPGGPVLLVLCGLLEASGGGRA. MRH domains lie at 111–246 and 342–469; these read SSCS…LCSH and SYCF…ICKI. A disulfide bridge connects residues Cys113 and Cys126. Asn195 is a glycosylation site (N-linked (GlcNAc...) asparagine). Intrachain disulfides connect Cys199-Cys232, Cys215-Cys244, Cys344-Cys357, Cys421-Cys455, and Cys436-Cys467.

In terms of assembly, may form a complex with OS9, HSPA5, SYVN1, and SEL1L with which it interacts directly. Interacts (via PRKCSH 2 domain) with KREMEN2 (when glycosylated). Interacts with HSPA5. In terms of processing, isoform 1 and isoform 2 are N-glycosylated.

The protein resides in the endoplasmic reticulum lumen. Its function is as follows. Probable lectin that binds selectively to improperly folded lumenal proteins. May function in endoplasmic reticulum quality control and endoplasmic reticulum-associated degradation (ERAD) of both non-glycosylated proteins and glycoproteins. This is Endoplasmic reticulum lectin 1 (ERLEC1) from Homo sapiens (Human).